We begin with the raw amino-acid sequence, 254 residues long: Alcohol dehydrogenase 1 (254 aa).

10–33 contacts NAD(+); it reads FVAGLGGIGFDTSREIVKSGPKNL. Ser138 serves as a coordination point for substrate. Catalysis depends on Tyr151, which acts as the Proton acceptor.

Belongs to the short-chain dehydrogenases/reductases (SDR) family. In terms of assembly, homodimer.

The enzyme catalyses a primary alcohol + NAD(+) = an aldehyde + NADH + H(+). It carries out the reaction a secondary alcohol + NAD(+) = a ketone + NADH + H(+). The polypeptide is Alcohol dehydrogenase 1 (Adh1) (Drosophila navojoa (Fruit fly)).